We begin with the raw amino-acid sequence, 150 residues long: UPF0260 protein PputGB1_4117 (150 aa).

The protein belongs to the UPF0260 family.

The protein is UPF0260 protein PputGB1_4117 of Pseudomonas putida (strain GB-1).